Consider the following 774-residue polypeptide: Acetyl-CoA decarbonylase/synthase complex subunit alpha (774 aa).

[4Fe-4S] cluster is bound by residues cysteine 73, cysteine 76, cysteine 77, cysteine 79, cysteine 84, and cysteine 94. Histidine 117 lines the CO pocket. [Ni-4Fe-4S] cluster is bound by residues histidine 251, cysteine 279, and cysteine 318. 4Fe-4S ferredoxin-type domains are found at residues leucine 398–alanine 427 and phenylalanine 436–threonine 466. The [4Fe-4S] cluster site is built by cysteine 408, cysteine 411, cysteine 414, cysteine 418, cysteine 446, cysteine 449, cysteine 452, and cysteine 456. Residues cysteine 514, cysteine 543, and cysteine 578 each coordinate [Ni-4Fe-4S] cluster.

It belongs to the Ni-containing carbon monoxide dehydrogenase family. As to quaternary structure, heterotetramer of two alpha and two epsilon subunits. The ACDS complex is made up of alpha, epsilon, beta, gamma and delta subunits with a probable stoichiometry of (alpha(2)epsilon(2))(4)-beta(8)-(gamma(1)delta(1))(8). It depends on [4Fe-4S] cluster as a cofactor. [Ni-4Fe-4S] cluster is required as a cofactor.

The enzyme catalyses CO + 2 oxidized [2Fe-2S]-[ferredoxin] + H2O = 2 reduced [2Fe-2S]-[ferredoxin] + CO2 + 2 H(+). Functionally, part of the ACDS complex that catalyzes the reversible cleavage of acetyl-CoA, allowing autotrophic growth from CO(2). The alpha-epsilon subcomponent functions as a carbon monoxide dehydrogenase. The polypeptide is Acetyl-CoA decarbonylase/synthase complex subunit alpha (Methanocaldococcus jannaschii (strain ATCC 43067 / DSM 2661 / JAL-1 / JCM 10045 / NBRC 100440) (Methanococcus jannaschii)).